The following is a 417-amino-acid chain: RH-like protein (417 aa).

The next 11 helical transmembrane spans lie at 12–32, 44–64, 77–97, 125–145, 172–192, 203–223, 238–258, 265–285, 287–307, 331–351, and 358–378; these read CLPL…FFFT, LVAS…GLGF, VAFN…LDGF, ISMN…MELV, IHVF…KPLP, TSPS…WPTF, VFST…VSSL, INMT…SASC, VIHS…ISIG, TFGL…ALRV, and MIGF…AMSI.

The protein belongs to the ammonium transporter (TC 2.A.49) family. Rh subfamily.

Its subcellular location is the membrane. May be part of an oligomeric complex which is likely to have a transport or channel function in the erythrocyte membrane. The sequence is that of RH-like protein from Macaca mulatta (Rhesus macaque).